Reading from the N-terminus, the 87-residue chain is Large ribosomal subunit protein bL27 (87 aa).

The segment at 1-24 (MATKKAGGSSRNGRDSAGRRLGVK) is disordered.

This sequence belongs to the bacterial ribosomal protein bL27 family.

This is Large ribosomal subunit protein bL27 from Rickettsia massiliae (strain Mtu5).